The primary structure comprises 398 residues: Carboxyaminopropylagmatine dehydrogenase (398 aa).

The protein belongs to the saccharopine dehydrogenase family.

It catalyses the reaction N(1)-[(S)-3-amino-3-carboxypropyl]agmatine + NADP(+) + H2O = L-aspartate 4-semialdehyde + agmatine + NADPH + H(+). It functions in the pathway amine and polyamine biosynthesis; spermidine biosynthesis. In terms of biological role, dehydrogenase involved in the biosynthesis of spermidine via the carboxyaminopropylagmatine (CAPA) pathway. Catalyzes the reductive condensation of agmatine and L-aspartate-beta-semialdehyde (ASA) into CAPA. Shows activity toward putrescine and 1,3-diaminopropane, but the catalytic efficiency is three to four orders of magnitude lower than that for agmatine. Cannot use cadaverine or spermidine. The sequence is that of Carboxyaminopropylagmatine dehydrogenase from Synechocystis sp. (strain ATCC 27184 / PCC 6803 / Kazusa).